We begin with the raw amino-acid sequence, 159 residues long: Protein Smg homolog (159 aa).

It belongs to the Smg family.

The polypeptide is Protein Smg homolog (Vibrio parahaemolyticus serotype O3:K6 (strain RIMD 2210633)).